Here is a 298-residue protein sequence, read N- to C-terminus: Protoheme IX farnesyltransferase (298 aa).

Helical transmembrane passes span 19 to 39 (VMSL…QPVN), 40 to 60 (PFVA…SGAL), 91 to 111 (LAVG…GGNW), 112 to 132 (FAAG…TIWL), 140 to 160 (IVIG…LPTG), 167 to 187 (LLMF…LALF), 213 to 233 (IFAY…TSVG), 236 to 256 (LYLA…WQIL), and 277 to 297 (LSLY…WVGG).

This sequence belongs to the UbiA prenyltransferase family. Protoheme IX farnesyltransferase subfamily. As to quaternary structure, interacts with CtaA.

It localises to the cell inner membrane. It catalyses the reaction heme b + (2E,6E)-farnesyl diphosphate + H2O = Fe(II)-heme o + diphosphate. Its pathway is porphyrin-containing compound metabolism; heme O biosynthesis; heme O from protoheme: step 1/1. In terms of biological role, converts heme B (protoheme IX) to heme O by substitution of the vinyl group on carbon 2 of heme B porphyrin ring with a hydroxyethyl farnesyl side group. In Paracoccus denitrificans, this protein is Protoheme IX farnesyltransferase.